Here is an 839-residue protein sequence, read N- to C-terminus: Protein translocase subunit SecA (839 aa).

ATP is bound by residues glutamine 85, 103–107 (GEGKT), and aspartate 493. Basic and acidic residues predominate over residues 780–790 (QIHEQERERAS). Residues 780 to 839 (QIHEQERERASQRATTAAPQNIQSQQSANTDDLPKVERNEACPCGSGKKFKNCHGRKSFS) are disordered. Positions 791 to 809 (QRATTAAPQNIQSQQSANT) are enriched in polar residues. Zn(2+)-binding residues include cysteine 821, cysteine 823, cysteine 832, and histidine 833. The segment covering 827–839 (KKFKNCHGRKSFS) has biased composition (basic residues).

The protein belongs to the SecA family. In terms of assembly, monomer and homodimer. Part of the essential Sec protein translocation apparatus which comprises SecA, SecYEG and auxiliary proteins SecDF. Other proteins may also be involved. Zn(2+) serves as cofactor.

It localises to the cell membrane. It is found in the cytoplasm. The enzyme catalyses ATP + H2O + cellular proteinSide 1 = ADP + phosphate + cellular proteinSide 2.. In terms of biological role, part of the Sec protein translocase complex. Interacts with the SecYEG preprotein conducting channel. Has a central role in coupling the hydrolysis of ATP to the transfer of proteins into and across the cell membrane, serving as an ATP-driven molecular motor driving the stepwise translocation of polypeptide chains across the membrane. The polypeptide is Protein translocase subunit SecA (Streptococcus pyogenes serotype M28 (strain MGAS6180)).